We begin with the raw amino-acid sequence, 129 residues long: Ribosome-binding factor A (129 aa).

It belongs to the RbfA family. Monomer. Binds 30S ribosomal subunits, but not 50S ribosomal subunits or 70S ribosomes.

The protein localises to the cytoplasm. In terms of biological role, one of several proteins that assist in the late maturation steps of the functional core of the 30S ribosomal subunit. Associates with free 30S ribosomal subunits (but not with 30S subunits that are part of 70S ribosomes or polysomes). Required for efficient processing of 16S rRNA. May interact with the 5'-terminal helix region of 16S rRNA. This chain is Ribosome-binding factor A, found in Actinobacillus succinogenes (strain ATCC 55618 / DSM 22257 / CCUG 43843 / 130Z).